Reading from the N-terminus, the 849-residue chain is G-type lectin S-receptor-like serine/threonine-protein kinase B120 (849 aa).

The N-terminal stretch at 1 to 25 is a signal peptide; it reads MRFFRKTSLYLSLFLYFFLYESSMA. In terms of domain architecture, Bulb-type lectin spans 26-153; sequence ANTIRRGESL…DTDRPIWESF (128 aa). At 26-438 the chain is on the extracellular side; it reads ANTIRRGESL…SEVGENRKTK (413 aa). Asn110, Asn191, Asn210, Asn230, Asn273, and Asn282 each carry an N-linked (GlcNAc...) asparagine glycan. An EGF-like; atypical domain is found at 295 to 332; it reads PDSECDQYNRCGKFGICDMKGSNGICSCIHGYEQVSVG. Cystine bridges form between Cys299/Cys311 and Cys305/Cys320. N-linked (GlcNAc...) asparagine glycosylation is found at Asn333, Asn349, and Asn388. One can recognise a PAN domain in the interval 346-427; the sequence is CERNISVGED…GGSSLHIRLA (82 aa). Intrachain disulfides connect Cys381/Cys402 and Cys385/Cys391. The helical transmembrane segment at 439–459 threads the bilayer; the sequence is IAVIVAVLVGVILIGIFALLL. The Cytoplasmic portion of the chain corresponds to 460–849; sequence WRFKRKKDVS…EITSTVVLGR (390 aa). The Protein kinase domain occupies 529-814; that stretch reads FCKENELGRG…TLAAPRQPTF (286 aa). ATP contacts are provided by residues 535 to 543 and Lys557; that span reads LGRGGFGPV. Ser563 carries the post-translational modification Phosphoserine. The segment at 618 to 635 is caM-binding; the sequence is TKQALIDWKLRFSIIEGI. Asp654 acts as the Proton acceptor in catalysis. 2 positions are modified to phosphoserine: Ser658 and Ser671. Thr688 carries the post-translational modification Phosphothreonine. Phosphoserine occurs at positions 732 and 837. At Thr844 the chain carries Phosphothreonine.

This sequence belongs to the protein kinase superfamily. Ser/Thr protein kinase family.

It localises to the cell membrane. The enzyme catalyses L-seryl-[protein] + ATP = O-phospho-L-seryl-[protein] + ADP + H(+). It catalyses the reaction L-threonyl-[protein] + ATP = O-phospho-L-threonyl-[protein] + ADP + H(+). The sequence is that of G-type lectin S-receptor-like serine/threonine-protein kinase B120 (B120) from Arabidopsis thaliana (Mouse-ear cress).